A 152-amino-acid polypeptide reads, in one-letter code: NADH-ubiquinone oxidoreductase chain 4 (152 aa).

4 consecutive transmembrane segments (helical) span residues 2 to 22 (FSGATTLMIAHGLTSSMYFCL), 43 to 63 (ILLPLTAFWWLTASLTNLALP), 84 to 104 (ITIVLTGLNMLITALYSLHMF), and 128 to 148 (MLMFMHLAPIILLSLNPNIIL).

It belongs to the complex I subunit 4 family.

The protein resides in the mitochondrion membrane. It carries out the reaction a ubiquinone + NADH + 5 H(+)(in) = a ubiquinol + NAD(+) + 4 H(+)(out). Core subunit of the mitochondrial membrane respiratory chain NADH dehydrogenase (Complex I) that is believed to belong to the minimal assembly required for catalysis. Complex I functions in the transfer of electrons from NADH to the respiratory chain. The immediate electron acceptor for the enzyme is believed to be ubiquinone. The protein is NADH-ubiquinone oxidoreductase chain 4 (MT-ND4) of Macaca fascicularis (Crab-eating macaque).